The sequence spans 206 residues: Pyridoxine/pyridoxamine 5'-phosphate oxidase (206 aa).

Residues 53–58 (RMVLLK), 68–69 (YT), lysine 75, and glutamine 97 each bind FMN. Lysine 58 serves as a coordination point for substrate. Residues tyrosine 115, arginine 119, and serine 123 each contribute to the substrate site. Residues 132–133 (QS) and tryptophan 177 each bind FMN. Substrate is bound at residue 183–185 (RLH). FMN is bound at residue arginine 187.

Belongs to the pyridoxamine 5'-phosphate oxidase family. Homodimer. It depends on FMN as a cofactor.

The catalysed reaction is pyridoxamine 5'-phosphate + O2 + H2O = pyridoxal 5'-phosphate + H2O2 + NH4(+). It carries out the reaction pyridoxine 5'-phosphate + O2 = pyridoxal 5'-phosphate + H2O2. Its pathway is cofactor metabolism; pyridoxal 5'-phosphate salvage; pyridoxal 5'-phosphate from pyridoxamine 5'-phosphate: step 1/1. The protein operates within cofactor metabolism; pyridoxal 5'-phosphate salvage; pyridoxal 5'-phosphate from pyridoxine 5'-phosphate: step 1/1. In terms of biological role, catalyzes the oxidation of either pyridoxine 5'-phosphate (PNP) or pyridoxamine 5'-phosphate (PMP) into pyridoxal 5'-phosphate (PLP). The polypeptide is Pyridoxine/pyridoxamine 5'-phosphate oxidase (Agrobacterium fabrum (strain C58 / ATCC 33970) (Agrobacterium tumefaciens (strain C58))).